Here is a 680-residue protein sequence, read N- to C-terminus: WD repeat-containing protein 48 homolog (680 aa).

8 WD repeats span residues 26-65 (QHRNGVNALQLDANNGKLYSAGRDAIIRVWNTRTDSSEKY), 71-110 (HHNDWVNDIVLCCNGRNLISASCDTTVKVWNAQKGFCMST), 113-152 (THRDYVQALAYAKDREQVASAGLDKAIFLWDVNTLTALTA), 164-203 (GSKDSIYSLAMNPSGTVIVSGSTENILRIWDPRTCMRSMK), 206-245 (GHTENVRCLVVSPDGNQVVSGSSDGTIKVWNLGQQRCVQT), 248-287 (VHKEGVWSLLMSENFQYIVSGSRDRNIIVTEMRNPSNKTL), 290-329 (EEQAPVLSLGYNIDKTGVWATTWNSDIRCWKLPMYDRCTM), and 350-389 (KGGAAIKECAVLNDKRYIITKDSQDQVVVYDVLRVVKKEQ). The disordered stretch occupies residues 592-616 (ETTPSGGNANNSLQNSQSDANSEGS).

Belongs to the WD repeat WDR48 family. In terms of assembly, catalytic component of the Usp12-46 deubiquitylase complex consisting of Usp12-46, Wdr20 and Uaf1; regulatory subunit that, together wtih Wdr20, stabilizes Usp12-46. The Usp12-46 deubiquitylase complex associates with arr/arrow; the interaction leads to deubiquitination and stabilization of arr/arrow.

Regulatory component of the Usp12-46 deubiquitylase complex. activates deubiquitination by increasing the catalytic turnover without increasing the affinity of deubiquitinating enzymes for the substrate. The complex deubiquitylates the wg/wingless-signaling receptor arr/arrow, which stabilizes the receptor and increases its concentration at the cell surface; this enhances the sensitivity of cells to wg/wingless-signal stimulation. This increases the amplitude and spatial range of the signaling response to the wg/wingless morphogen gradient, facilitating the precise concentration-dependent regulation of its target genes. Together with Wdr20 and Usp12-46 required for wg/wingless-mediated signaling in the wing imaginal disc and for wg/wingless-dependent regulation of intestinal stem cell proliferation. The chain is WD repeat-containing protein 48 homolog from Drosophila yakuba (Fruit fly).